We begin with the raw amino-acid sequence, 124 residues long: Small ribosomal subunit protein uS12 (124 aa).

Aspartate 89 carries the 3-methylthioaspartic acid modification. Residues 105-124 (QGVKNRKQARSRYGAKKEKS) form a disordered region. Positions 108 to 118 (KNRKQARSRYG) are enriched in basic residues.

It belongs to the universal ribosomal protein uS12 family. Part of the 30S ribosomal subunit. Contacts proteins S8 and S17. May interact with IF1 in the 30S initiation complex.

Its function is as follows. With S4 and S5 plays an important role in translational accuracy. Functionally, interacts with and stabilizes bases of the 16S rRNA that are involved in tRNA selection in the A site and with the mRNA backbone. Located at the interface of the 30S and 50S subunits, it traverses the body of the 30S subunit contacting proteins on the other side and probably holding the rRNA structure together. The combined cluster of proteins S8, S12 and S17 appears to hold together the shoulder and platform of the 30S subunit. In Mycobacteroides abscessus (strain ATCC 19977 / DSM 44196 / CCUG 20993 / CIP 104536 / JCM 13569 / NCTC 13031 / TMC 1543 / L948) (Mycobacterium abscessus), this protein is Small ribosomal subunit protein uS12.